The primary structure comprises 425 residues: Adenylosuccinate synthetase (425 aa).

Residues 12 to 18 (GDEGKGK) and 40 to 42 (GHT) each bind GTP. The active-site Proton acceptor is D13. Mg(2+)-binding residues include D13 and G40. IMP is bound by residues 13 to 16 (DEGK), 38 to 41 (NAGH), T127, R141, Q222, T237, and R301. The active-site Proton donor is H41. Substrate is bound at residue 297–303 (AVTGRPR). GTP is bound by residues R303, 329-331 (KID), and 411-413 (SVG).

The protein belongs to the adenylosuccinate synthetase family. In terms of assembly, homodimer. It depends on Mg(2+) as a cofactor.

Its subcellular location is the cytoplasm. The catalysed reaction is IMP + L-aspartate + GTP = N(6)-(1,2-dicarboxyethyl)-AMP + GDP + phosphate + 2 H(+). Its pathway is purine metabolism; AMP biosynthesis via de novo pathway; AMP from IMP: step 1/2. Functionally, plays an important role in the de novo pathway of purine nucleotide biosynthesis. Catalyzes the first committed step in the biosynthesis of AMP from IMP. The polypeptide is Adenylosuccinate synthetase (Fusobacterium nucleatum).